Consider the following 119-residue polypeptide: Large ribosomal subunit protein uL14 (119 aa).

The protein belongs to the universal ribosomal protein uL14 family. In terms of assembly, part of the 50S ribosomal subunit. Forms a cluster with proteins L3 and L19. In the 70S ribosome, L14 and L19 interact and together make contacts with the 16S rRNA in bridges B5 and B8.

Binds to 23S rRNA. Forms part of two intersubunit bridges in the 70S ribosome. This is Large ribosomal subunit protein uL14 from Ehrlichia ruminantium (strain Gardel).